Here is a 404-residue protein sequence, read N- to C-terminus: Homocysteine-responsive endoplasmic reticulum-resident ubiquitin-like domain member 2 protein (404 aa).

A Ubiquitin-like domain is found at 10–89; the sequence is VTLIIKAPNQ…HMVHLVCASR (80 aa). Positions 86–153 are disordered; it reads CASRSPPSSP…TLSQAQTDPA (68 aa). 2 stretches are compositionally biased toward low complexity: residues 88 to 97 and 109 to 126; these read SRSPPSSPKS and SSTSSNSDHSDSTTPSPS. Residues 127–153 show a composition bias toward polar residues; it reads QESLSLVTGSSEGLRQRTLSQAQTDPA. Residues 301–321 traverse the membrane as a helical segment; sequence FIMVMGAMLLVYLHQAGWFPF.

It localises to the membrane. In terms of biological role, could be involved in the unfolded protein response (UPR) pathway. The protein is Homocysteine-responsive endoplasmic reticulum-resident ubiquitin-like domain member 2 protein (Herpud2) of Mus musculus (Mouse).